The primary structure comprises 444 residues: Probable ribonuclease FAU-1 (444 aa).

It belongs to the FAU-1 family.

Functionally, probable RNase involved in rRNA stability through maturation and/or degradation of precursor rRNAs. Binds to RNA in loop regions with AU-rich sequences. This chain is Probable ribonuclease FAU-1, found in Pyrobaculum arsenaticum (strain DSM 13514 / JCM 11321 / PZ6).